The primary structure comprises 110 residues: Protein E7 (110 aa).

Residues 1–47 (MHGPKPTVQEIVLELCPCNEIEPVDLVCHEQLGDSDDEIDEPDHAVN) are E7 terminal domain. Residues 26–30 (LVCHE) carry the LXCXE motif; interaction with host RB1 and TMEM173/STING motif. A zinc finger lies at 69 to 105 (CCKCNNLLQLVVEASRENLRNVELLFMDSLNFVCPWC). The Nuclear export signal signature appears at 87 to 95 (LRNVELLFM).

This sequence belongs to the papillomaviridae E7 protein family. Homodimer. Homooligomer. Interacts with host RB1; this interaction induces dissociation of RB1-E2F1 complex thereby disrupting RB1 activity. Interacts with host EP300; this interaction represses EP300 transcriptional activity. Interacts with protein E2; this interaction inhibits E7 oncogenic activity. Interacts with host TMEM173/STING; this interaction impairs the ability of TMEM173/STING to sense cytosolic DNA and promote the production of type I interferon (IFN-alpha and IFN-beta). Highly phosphorylated.

The protein localises to the host cytoplasm. Its subcellular location is the host nucleus. Its function is as follows. Plays a role in viral genome replication by driving entry of quiescent cells into the cell cycle. Stimulation of progression from G1 to S phase allows the virus to efficiently use the cellular DNA replicating machinery to achieve viral genome replication. E7 protein has both transforming and trans-activating activities. Induces the disassembly of the E2F1 transcription factor from RB1, with subsequent transcriptional activation of E2F1-regulated S-phase genes. Interferes with host histone deacetylation mediated by HDAC1 and HDAC2, leading to transcription activation. Also plays a role in the inhibition of both antiviral and antiproliferative functions of host interferon alpha. Interaction with host TMEM173/STING impairs the ability of TMEM173/STING to sense cytosolic DNA and promote the production of type I interferon (IFN-alpha and IFN-beta). The polypeptide is Protein E7 (Human papillomavirus type ME180).